Consider the following 343-residue polypeptide: Arginine-hydroxylase NDUFAF5, mitochondrial (343 aa).

Residues 1–29 (MLRRVVLSRLYARLGGPAVSAGRGGRRGV) constitute a mitochondrion transit peptide. The interval 18-40 (AVSAGRGGRRGVASSVPPSGSTS) is disordered.

Belongs to the methyltransferase superfamily. As to quaternary structure, interacts with NDUFAF8, leading to stabilize NDUFAF5. Interacts with NDUFS7. Interacts with PYURF (via TRM112 domain); the interaction is direct and stabilizes NDUFAF5 protein.

The protein resides in the mitochondrion inner membrane. Functionally, arginine hydroxylase that mediates hydroxylation of 'Arg-111' of NDUFS7 and is involved in the assembly of mitochondrial NADH:ubiquinone oxidoreductase complex (complex I, MT-ND1) at early stages. May also have methyltransferase activity. The protein is Arginine-hydroxylase NDUFAF5, mitochondrial of Rattus norvegicus (Rat).